We begin with the raw amino-acid sequence, 263 residues long: Polyglutamine-binding protein 1 (263 aa).

The region spanning 46 to 80 is the WW domain; sequence EGLPPSWYKVFDPSCGLPYYWNVETDLVSWLSPHD. The segment at 94 to 263 is disordered; the sequence is NSNADAEDKS…AEASRSKQQD (170 aa). Residues 99 to 173 are compositionally biased toward basic and acidic residues; that stretch reads AEDKSERNLE…DKADREDGKD (75 aa). The 1-1; approximate repeat unit spans residues 104–110; that stretch reads ERNLEKV. The segment at 104–138 is 5 X 7 AA approximate tandem repeats of D-R-[NS]-H-E-K-S; the sequence is ERNLEKVDRNHEKSDRSHEKPDRSHEKADRNHEKS. A 1-2 repeat occupies 111-117; the sequence is DRNHEKS. The 1-3; approximate repeat unit spans residues 118–124; sequence DRSHEKP. Residues 125–131 form a 1-4; approximate repeat; sequence DRSHEKA. 10 tandem repeats follow at residues 132–138, 139–140, 141–142, 143–144, 150–151, 152–153, 154–155, 156–157, 158–159, and 160–161. Residues 139–144 form a 3 X 2 AA tandem repeats of [DE]-R region; it reads DRERER. The 6 X 2 AA tandem repeats of [DE]-R stretch occupies residues 150 to 161; sequence DRERDRDRERER. Residues 243–253 are important for interaction with TXNL4A; it reads YPSPGAVLRAN. Phosphoserine is present on Ser245.

Interacts with POU3F2/Brn-2, ATXN1, TXNL4A, HTT and AR. Interaction with ATXN1 correlates positively with the length of the polyglutamine tract. Interacts with RNA polymerase II large subunit in a phosphorylation-dependent manner. Forms a ternary complex with ATXN1 mutant and phosphorylated RNA polymerase II. Interacts (via C-terminus) with TXNL4A and CD2BP2. Interacts (via WW domain) with ATN1 and SF3B1, and may interact with additional splice factors. Interacts (via WW domain) with WBP11; Leading to reduce interaction between PQBP1 and TXNL4A. Interacts with CAPRIN1. Interacts with DDX1. Interacts with SFPQ. Interacts with KHSRP.

Its subcellular location is the nucleus. It localises to the nucleus speckle. The protein localises to the cytoplasmic granule. Its function is as follows. Intrinsically disordered protein that acts as a scaffold, and which is involved in different processes, such as pre-mRNA splicing, transcription regulation, innate immunity and neuron development. Interacts with splicing-related factors via the intrinsically disordered region and regulates alternative splicing of target pre-mRNA species. May suppress the ability of POU3F2 to transactivate the DRD1 gene in a POU3F2 dependent manner. Can activate transcription directly or via association with the transcription machinery. May be involved in ATXN1 mutant-induced cell death. The interaction with ATXN1 mutant reduces levels of phosphorylated RNA polymerase II large subunit. Involved in the assembly of cytoplasmic stress granule, possibly by participating in the transport of neuronal RNA granules. Also acts as an innate immune sensor of infection by retroviruses, by detecting the presence of reverse-transcribed DNA in the cytosol. Directly binds retroviral reverse-transcribed DNA in the cytosol and interacts with CGAS, leading to activate the cGAS-STING signaling pathway, triggering type-I interferon production. This Rattus norvegicus (Rat) protein is Polyglutamine-binding protein 1 (Pqbp1).